Reading from the N-terminus, the 392-residue chain is Immunoglobulin-binding protein EibA (392 aa).

The signal sequence occupies residues 1 to 27 (MSKKFTKAVLSAAMAGVLFGVSFDIMA). Residues 28 to 301 (AEQSYSALNA…IAANTRTLQQ (274 aa)) form a surface exposed passenger domain region. Topologically, residues 28–341 (AEQSYSALNA…GLFQPYSVGK (314 aa)) are extracellular. The stretch at 174 to 215 (ESANSTIVANELEAQKGKLDAQKGELEAQKKNLGELTTRTDK) forms a coiled coil. Positions 187–230 (AQKGKLDAQKGELEAQKKNLGELTTRTDKIDAAAAATAAKVESR) are right-handed coiled-coil (RHcc). The interval 231–256 (TLVGVSSDGTLTRAEGAKNTISVNDG) is saddle domain. Residues 257–322 (LVALSGRTDR…INENHKEMKR (66 aa)) form a left-handed coiled-coil (LHcc) region. The tract at residues 299-341 (LQQHSARLDSQQRQINENHKEMKRAAAQSAALTGLFQPYSVGK) is outer membrane translocation of the passenger domain. 4 beta stranded membrane-spanning segments follow: residues 342 to 352 (FNASAAVGGYS), 355 to 366 (QALAVGVGYRFN), 369 to 378 (TAAKAGVAFS), and 382 to 392 (ASWNVGVNFEF). The segment at 342 to 392 (FNASAAVGGYSDEQALAVGVGYRFNEQTAAKAGVAFSDGDASWNVGVNFEF) is translocator domain.

The protein belongs to the autotransporter-2 (AT-2) (TC 1.B.40) family. Eib subfamily. As to quaternary structure, homotrimer; can probably form mixed heterotrimers in vivo. Will form mixed heterotrimers with EibD; these are correctly located in the outer membrane and bind IgG Fc, although less well than homotrimers. Does not form trimers with distantly related YadA from Y.enterocolitica; coexpression was lethal and one of the genes is eliminated in vivo. If the full translocator domain (299-392) is exchanged with that of YadA ('368-455'), will form heterotrimers with YadA and vice-versa. In denaturing gels runs as 2 bands of about 121 and 131 kDa; extracting the sample with 88% phenol at 70 degrees Celsius reduces part of the signal to about 45 kDa. Binds the Fc portion of IgG; binds more than 1 Fc per subunit.

The protein localises to the cell surface. The protein resides in the cell outer membrane. Its function is as follows. Binds (in a non-immune fashion) to the Fc portion of human IgG but not IgA; binding occurs on the cell surface. Confers the ability to survive exposure to human serum exposure. Binds to the Fc portion of human IgG and to whole mouse antibodies also via Fc, binds more than 1 Fc or IgG. This is Immunoglobulin-binding protein EibA from Escherichia coli.